A 78-amino-acid polypeptide reads, in one-letter code: MSAHCMLTGARPGFGNRISHSHRRTSRRFDPNIQTKRYWLPSENRHVRLRLSTKGIRTVDSIGVEAAVARIRARGVRI.

The protein belongs to the bacterial ribosomal protein bL28 family.

In Streptomyces coelicolor (strain ATCC BAA-471 / A3(2) / M145), this protein is Large ribosomal subunit protein bL28B (rpmB2).